A 117-amino-acid chain; its full sequence is Large ribosomal subunit protein bL20c (117 aa).

The protein belongs to the bacterial ribosomal protein bL20 family.

The protein localises to the plastid. Its subcellular location is the chloroplast. Functionally, binds directly to 23S ribosomal RNA and is necessary for the in vitro assembly process of the 50S ribosomal subunit. It is not involved in the protein synthesizing functions of that subunit. The sequence is that of Large ribosomal subunit protein bL20c (rpl20) from Arabidopsis thaliana (Mouse-ear cress).